A 276-amino-acid polypeptide reads, in one-letter code: MPRLDDHLWRGPCAKGTKHRSHPRASARGLVAKAGEMINSSGSGPSLLAAHGALGTDPAHGPQSAGVGGQGSSSHVNSWHHHLVQRSLVLFSVGVVLALVLNLLQVQRNVTLFPDEVIATIFSSAWWVPPCCGTAAAVVGLLYPCIDSHLGEPHKFKREWASVMRCVAVFVGINHASAKLDFANNVQLSLTLAALSLGLWWTFDRSRSGLGLGITIAFLATLITQLLVYNGVYQYTSPDFLYIRSWLPCIFFSGGVTVGNIGRQLAMGVPEKPHSD.

2 disordered regions span residues 1 to 26 (MPRLDDHLWRGPCAKGTKHRSHPRAS) and 49 to 73 (AAHGALGTDPAHGPQSAGVGGQGSS). The Cytoplasmic segment spans residues 1 to 83 (MPRLDDHLWR…SHVNSWHHHL (83 aa)). A compositionally biased stretch (basic residues) spans 16–25 (GTKHRSHPRA). Residues 84 to 106 (VQRSLVLFSVGVVLALVLNLLQV) form a helical membrane-spanning segment. The Extracellular portion of the chain corresponds to 107 to 125 (QRNVTLFPDEVIATIFSSA). The helical transmembrane segment at 126–143 (WWVPPCCGTAAAVVGLLY) threads the bilayer. Topologically, residues 144–158 (PCIDSHLGEPHKFKR) are cytoplasmic. Glycyl lysine isopeptide (Lys-Gly) (interchain with G-Cter in ubiquitin) cross-links involve residues Lys155 and Lys157. Residues 159–181 (EWASVMRCVAVFVGINHASAKLD) traverse the membrane as a helical segment. The Extracellular segment spans residues 182–184 (FAN). A helical transmembrane segment spans residues 185 to 203 (NVQLSLTLAALSLGLWWTF). Topologically, residues 204 to 208 (DRSRS) are cytoplasmic. The residue at position 206 (Ser206) is a Phosphoserine. Residues 209–230 (GLGLGITIAFLATLITQLLVYN) traverse the membrane as a helical segment. At 231 to 244 (GVYQYTSPDFLYIR) the chain is on the extracellular side. Residues 245–262 (SWLPCIFFSGGVTVGNIG) form a helical membrane-spanning segment. The Cytoplasmic portion of the chain corresponds to 263–276 (RQLAMGVPEKPHSD). Residues 270–276 (PEKPHSD) carry the KxHxx motif.

Belongs to the INSIG family. As to quaternary structure, interacts with SCAP; interaction is direct and only takes place in the presence of sterols; it prevents interaction between SCAP and the coat protein complex II (COPII). Associates with the SCAP-SREBP complex (composed of SCAP and SREBF1/SREBP1 or SREBF2/SREBP2); association is mediated via its interaction with SCAP and only takes place in the presence of sterols. Interaction with SCAP is mutually exclusive with PAQR3. Interacts with HMGCR (via its SSD); the interaction, accelerated by sterols, leads to the recruitment of HMGCR to AMFR/gp78 for its ubiquitination by the sterol-mediated ERAD pathway. Interacts with AMFR/gp78 (via its membrane domain); the interaction recruits HMCR at the ER membrane for its ubiquitination and degradation by the sterol-mediated ERAD pathway. Interacts with SOAT2/ACAT2; leading to promote recruitment of AMFR/gp78 and subsequent ubiquitination of SOAT2/ACAT2. Interacts with RNF139. Interacts with RNF145. Post-translationally, phosphorylation at Ser-206 by PCK1 reduces binding to oxysterol, disrupting the interaction between INSIG1 and SCAP, thereby promoting nuclear translocation of SREBP proteins (SREBF1/SREBP1 or SREBF2/SREBP2) and subsequent transcription of downstream lipogenesis-related genes. Ubiquitinated by AMFR/gp78 in response to sterol deprivation, leading to its degradation: when the SCAP-SREBP complex becomes dissociated from INSIG1, INSIG1 is then ubiquitinated and degraded in proteasomes. Although ubiquitination is required for rapid INSIG1 degradation, it is not required for release of the SCAP-SREBP complex. Ubiquitinated by RNF139.

It is found in the endoplasmic reticulum membrane. Oxysterol-binding protein that mediates feedback control of cholesterol synthesis by controlling both endoplasmic reticulum to Golgi transport of SCAP and degradation of HMGCR. Acts as a negative regulator of cholesterol biosynthesis by mediating the retention of the SCAP-SREBP complex in the endoplasmic reticulum, thereby blocking the processing of sterol regulatory element-binding proteins (SREBPs) SREBF1/SREBP1 and SREBF2/SREBP2. Binds oxysterol, including 25-hydroxycholesterol, regulating interaction with SCAP and retention of the SCAP-SREBP complex in the endoplasmic reticulum. In presence of oxysterol, interacts with SCAP, retaining the SCAP-SREBP complex in the endoplasmic reticulum, thereby preventing SCAP from escorting SREBF1/SREBP1 and SREBF2/SREBP2 to the Golgi. Sterol deprivation or phosphorylation by PCK1 reduce oxysterol-binding, disrupting the interaction between INSIG1 and SCAP, thereby promoting Golgi transport of the SCAP-SREBP complex, followed by processing and nuclear translocation of SREBF1/SREBP1 and SREBF2/SREBP2. Also regulates cholesterol synthesis by regulating degradation of HMGCR: initiates the sterol-mediated ubiquitin-mediated endoplasmic reticulum-associated degradation (ERAD) of HMGCR via recruitment of the reductase to the ubiquitin ligases AMFR/gp78 and/or RNF139. Also regulates degradation of SOAT2/ACAT2 when the lipid levels are low: initiates the ubiquitin-mediated degradation of SOAT2/ACAT2 via recruitment of the ubiquitin ligases AMFR/gp78. This Bos taurus (Bovine) protein is Insulin-induced gene 1 protein.